The chain runs to 880 residues: Inner centromere protein (880 aa).

The disordered stretch occupies residues 52 to 104 (EPELMPKTPSQKNRRKKRRVSNIQDENRDPVRKRLSRRKSRSSQVGTRHLRSK). Phosphoserine occurs at positions 72, 142, and 147. A phosphothreonine mark is found at Thr-149 and Thr-189. Positions 175 to 229 (KGSLPPSPVSQGTLTSEEELTPKKSEAGKLDSVTVNSLKATPQSPKNRGVGEGRS) are disordered. Ser-190 is modified (phosphoserine). The span at 194–203 (LTPKKSEAGK) shows a compositional bias: basic and acidic residues. 2 positions are modified to phosphothreonine: Thr-195 and Thr-215. A compositionally biased stretch (polar residues) spans 207–220 (VTVNSLKATPQSPK). Ser-218, Ser-239, Ser-245, Ser-248, Ser-251, and Ser-259 each carry phosphoserine. Thr-270 carries the phosphothreonine modification. Phosphoserine occurs at positions 284 and 290. Disordered regions lie at residues 303 to 322 (KQENGSRRSSRRIAKKAGKE) and 350 to 461 (EQEP…PANK). Acidic residues predominate over residues 352–366 (EPVEVAEPEEAEEEQ). Ser-376 is subject to Phosphoserine. At Thr-382 the chain carries Phosphothreonine. The segment covering 385 to 402 (AISTPTSKPAAAGQTTTV) has biased composition (polar residues). The residue at position 421 (Ser-421) is a Phosphoserine. The segment covering 434-445 (EPDEEQLEDEEL) has biased composition (acidic residues). N-linked (GlcNAc...) asparagine glycosylation is present at Asn-450. The residue at position 452 (Thr-452) is a Phosphothreonine. Phosphoserine is present on residues Ser-454 and Ser-488. An SAH region spans residues 506 to 733 (KCSFVEKERQ…EEKKRKEEQQ (228 aa)). Positions 506 to 759 (KCSFVEKERQ…EVAAARKVLN (254 aa)) form a coiled coil. Disordered stretches follow at residues 513 to 541 (ERQRLESLRRKEEAEQRRRQKVEEDKRRR), 563 to 617 (VEQM…KQEE), 629 to 713 (EEER…KALR), and 775 to 813 (TPQGPKSIPKISVDDYGMDLNSDDSTDDESHPRKPIPSW). 3 stretches are compositionally biased toward basic and acidic residues: residues 563 to 596 (VEQMKEEKKKQIEQKFAQIDEKTEKAKEERLAEK), 604 to 617 (KKMEEVEARRKQEE), and 630 to 713 (EERR…KALR). The segment at 794-868 (LNSDDSTDDE…RTSSAVWNSP (75 aa)) is IN box. Phosphoserine is present on residues Ser-796 and Ser-799. Residue Thr-800 is modified to Phosphothreonine. The residue at position 860 (Thr-860) is a Phosphothreonine; by AURKB. Phosphoserine occurs at positions 861, 862, and 867.

This sequence belongs to the INCENP family. Component of the chromosomal passenger complex (CPC) composed of at least BIRC5/survivin, CDCA8/borealin, INCENP, AURKB or AURKC; in the complex binds directly to AURKB or AURKC via the IN box, and forms a triple-helix bundle-based subcomplex with BIRC5 and CDCA8 via its N-terminus. The reported homodimerization is questioned as the SAH domain is shown to be monomeric. Interacts with H2AZ1. Interacts with CBX1 and CBX3. Interacts with tubulin beta chain. Interacts with EVI5. Interacts with CBX5; POGZ and INCENP compete for interaction with CBX5. Interacts with POGZ. Interacts with JTB. Phosphorylation by AURKB at its C-terminal part is important for AURKB activation by INCENP.

The protein resides in the chromosome. It localises to the centromere. Its subcellular location is the cytoplasm. It is found in the cytoskeleton. The protein localises to the spindle. The protein resides in the nucleus. It localises to the kinetochore. Its subcellular location is the midbody. Its function is as follows. Component of the chromosomal passenger complex (CPC), a complex that acts as a key regulator of mitosis. The CPC complex has essential functions at the centromere in ensuring correct chromosome alignment and segregation and is required for chromatin-induced microtubule stabilization and spindle assembly. Acts as a scaffold regulating CPC localization and activity. The C-terminus associates with AURKB or AURKC, the N-terminus associated with BIRC5/survivin and CDCA8/borealin tethers the CPC to the inner centromere, and the microtubule binding activity within the central SAH domain directs AURKB/C toward substrates near microtubules. The flexibility of the SAH domain is proposed to allow AURKB/C to follow substrates on dynamic microtubules while ensuring CPC docking to static chromatin. Activates AURKB and AURKC. Controls the kinetochore localization of BUB1. The polypeptide is Inner centromere protein (Incenp) (Mus musculus (Mouse)).